A 365-amino-acid chain; its full sequence is 2-aminoethylphosphonate--pyruvate transaminase (365 aa).

Residue Lys194 is modified to N6-(pyridoxal phosphate)lysine.

Belongs to the class-V pyridoxal-phosphate-dependent aminotransferase family. PhnW subfamily. Homodimer. Requires pyridoxal 5'-phosphate as cofactor.

It catalyses the reaction (2-aminoethyl)phosphonate + pyruvate = phosphonoacetaldehyde + L-alanine. In terms of biological role, involved in phosphonate degradation. The polypeptide is 2-aminoethylphosphonate--pyruvate transaminase (Bacillus thuringiensis subsp. konkukian (strain 97-27)).